Consider the following 424-residue polypeptide: Dehydrogenase FUM7 (424 aa).

It belongs to the iron-containing alcohol dehydrogenase family. It depends on Fe cation as a cofactor.

The protein operates within mycotoxin biosynthesis. In terms of biological role, dehydrogenase; part of the gene cluster that mediates the biosynthesis of fumonisins B1 (FB1), B2 (FB2), B3 (FB3), and B4 (FB4), which are carcinogenic mycotoxins. Within the pathway, FUM7 is involved the addition of the tricarballylic moieties to the carbon backbone. FUM7 dehydrogenase removes the C-3 hydroxyl of citrate to form tricarballylic acid either before or after the CoA activation by the FUM10 acyl-CoA synthetase and FUM14 catalyzed esterification of CoA-activated tricarballylic acid to the C-14 and C-15 hydroxyls of the fumonisin backbone. The biosynthesis starts with the FUM1-catalyzed carbon chain assembly from one molecule of acetyl-CoA, eight molecules of malonyl-CoA, and two molecules of methionine (in S-adenosyl form). The C18 polyketide chain is released from the enzyme by a nucleophilic attack of a carbanion, which is derived from R-carbon of alanine by decarboxylation, on the carbonyl carbon of polyketide acyl chain. This step is catalyzed by the pyridoxal 5'-phosphate-dependent aminoacyl transferase FUM8. The resultant 3-keto intermediate is then stereospecifically reduced to a 3-hydroxyl product by reductase FUM13. Subsequent oxidations at C-10 by the cytochrome P450 monooxygenase FUM2, C-14 and C-15 by FUM6, FUM12 or FUM15, tricarballylic esterification of the hydroxyl groups on C-14 and C-15 by acyltransferase FUM14, and C-5 hydroxylation by 2-keto-glutarate-dependent dioxygenase FUM3 furnish the biosynthesis of fumonisins. The tricarballylic moieties are most likely derived from the citric acid cycle, and their addition to the carbon backbone may involve FUM7, FUM10, FUM11 and FUM14. The protein is Dehydrogenase FUM7 of Gibberella moniliformis (strain M3125 / FGSC 7600) (Maize ear and stalk rot fungus).